Here is a 510-residue protein sequence, read N- to C-terminus: Probable cytochrome P450 517A2 (510 aa).

Residues 1 to 21 (MRILIIIILIIIVFLVKDTIK) form a helical membrane-spanning segment. Heme is bound at residue C450.

It belongs to the cytochrome P450 family. Requires heme as cofactor.

Its subcellular location is the membrane. The polypeptide is Probable cytochrome P450 517A2 (cyp517A2) (Dictyostelium discoideum (Social amoeba)).